Here is a 34-residue protein sequence, read N- to C-terminus: MSDIN-like toxin proprotein 4 (34 aa).

The propeptide occupies methionine 1 to proline 10. Residues valine 11 to proline 17 constitute a cross-link (cyclopeptide (Val-Pro)). Positions cysteine 18–cysteine 34 are excised as a propeptide.

The protein belongs to the MSDIN fungal toxin family. In terms of processing, processed by the macrocyclase-peptidase enzyme POPB to yield a toxic cyclic heptapeptide. POPB first removes 10 residues from the N-terminus. Conformational trapping of the remaining peptide forces the enzyme to release this intermediate rather than proceed to macrocyclization. The enzyme rebinds the remaining peptide in a different conformation and catalyzes macrocyclization of the N-terminal 7 residues. As to expression, expressed in basidiocarps.

Functionally, probable toxin that belongs to the MSDIN-like toxin family responsible for a large number of food poisoning cases and deaths. This Amanita exitialis (Guangzhou destroying angel) protein is MSDIN-like toxin proprotein 4.